A 349-amino-acid chain; its full sequence is Small ribosomal subunit protein uS2 (349 aa).

Positions 302–334 (QNNYDPSKRGYNPKYVNHKSTFNKFNNKKPVDS) are disordered.

The protein belongs to the universal ribosomal protein uS2 family.

The chain is Small ribosomal subunit protein uS2 from Ureaplasma parvum serovar 3 (strain ATCC 27815 / 27 / NCTC 11736).